Here is an 87-residue protein sequence, read N- to C-terminus: MKLTCVLVVLLLLLPYGDLITNNYIRGAARKVTPWRRNLKTRDVCDSLVGGHCIHNGCWCDQDAPHGNCCDTDGCTAAWWCPGTKWD.

The signal sequence occupies residues 1 to 19 (MKLTCVLVVLLLLLPYGDL). The propeptide occupies 20–42 (ITNNYIRGAARKVTPWRRNLKTR). 4 cysteine pairs are disulfide-bonded: C45–C58, C53–C70, C60–C75, and C69–C81. 6'-bromotryptophan is present on W59. P65 carries the 4-hydroxyproline modification. 2 positions are modified to 6'-bromotryptophan: W79 and W80. P82 bears the 4-hydroxyproline mark. Position 86 is a 6'-bromotryptophan (W86).

In terms of tissue distribution, expressed by the venom duct.

It is found in the secreted. In terms of biological role, mu-conotoxins block voltage-gated sodium channels. This toxin reversibly blocks voltage-gated sodium channel in cephalopods (tested on squid giant-fiber-lobe neurons) with an inhibitor constant (Ki) of 15 nmol/l, with no alteration in the voltage dependence of sodium conductance or on the kinetics of inactivation. Has no effect on sodium channels of the two gastropod S.luhuanus and A.californica (which are not natural prey). This is Mu-conotoxin cal12b from Californiconus californicus (California cone).